A 373-amino-acid chain; its full sequence is MPSSMSGYIPSYLDKDELCVVCGDKATGYHYRCITCEGCKGFFRRTIQKNLHPSYSCKYEGKCVIDKVTRNQCQECRFKKCIAVGMATDLVLDDSKRLAKRKLIEENREKRRKDELQKTLVQKPEPTPEEWELIQVVTEAHVATNAQGSHWKQKRKFLPEDIGQAPIVNAPEGGKVDLEAFSQFTKIITPAITRVVDFAKKLPMFCELPCEDQIILLKGCCMEIMSLRAAVRYDPESETLTLNGEMAVTRGQLKNGGLGVVSDAIFDLGVSLSSFNLDDTEVALLQAVLLMSSDRPGLSSVERIEKCQEGFLLAFEHYINYRKHNVAHFWPKLLMKVTDLRMIGACHASRFLHMKVECPTELFPPLFLEVFED.

Positions 1–18 (MPSSMSGYIPSYLDKDEL) are modulating. Zn(2+) is bound by residues cysteine 19, cysteine 22, cysteine 36, cysteine 39, cysteine 57, cysteine 63, cysteine 73, and cysteine 76. NR C4-type zinc fingers lie at residues 19–39 (CVVC…CEGC) and 57–81 (CKYE…FKKC). Residues 19-93 (CVVCGDKATG…VGMATDLVLD (75 aa)) constitute a DNA-binding region (nuclear receptor). The NR LBD domain occupies 129-373 (EEWELIQVVT…PPLFLEVFED (245 aa)). 3 residues coordinate 3,3',5-triiodo-L-thyronine: arginine 194, asparagine 243, and histidine 347. Arginine 194, asparagine 243, and histidine 347 together coordinate L-thyroxine.

Belongs to the nuclear hormone receptor family. NR1 subfamily.

It localises to the nucleus. Nuclear hormone receptor that can act as a repressor or activator of transcription. High affinity receptor for thyroid hormones, including triiodothyronine and thyroxine. The polypeptide is Thyroid hormone receptor beta (thrb) (Aquarana catesbeiana (American bullfrog)).